A 1236-amino-acid polypeptide reads, in one-letter code: DNA topoisomerase 2 (1236 aa).

Residues Asn-65, Asn-96, 124-126 (SSN), 137-144 (GRHGYGAK), and 354-356 (QSK) each bind ATP. Residues 434-548 (RTLIITEGDS…KLLQNNPGYI (115 aa)) form the Toprim domain. Mg(2+) is bound by residues Glu-440, Asp-517, and Asp-519. Positions 685 to 1101 (IPHCVDGLKP…TPVKMWLTEL (417 aa)) constitute a Topo IIA-type catalytic domain. Catalysis depends on Tyr-775, which acts as the O-(5'-phospho-DNA)-tyrosine intermediate. Residues 956 to 965 (ALAQRIYING) form an interaction with DNA region. The disordered stretch occupies residues 1161 to 1211 (YEKPPPSKRRPGESVGGARPSDSAARTVGKRLVGSRSEFKNKKPMSRKNNV).

The protein belongs to the type II topoisomerase family. Homodimer. Mg(2+) serves as cofactor. The cofactor is Mn(2+). Requires Ca(2+) as cofactor.

It localises to the nucleus. It carries out the reaction ATP-dependent breakage, passage and rejoining of double-stranded DNA.. In terms of biological role, control of topological states of DNA by transient breakage and subsequent rejoining of DNA strands. Topoisomerase II makes double-strand breaks. The chain is DNA topoisomerase 2 (TOP2) from Leishmania chagasi.